The following is a 501-amino-acid chain: Acetylcholine receptor subunit beta (501 aa).

The N-terminal stretch at 1–23 (MALGALLLILGILGTPLAPGARG) is a signal peptide. Residues 24-244 (SEAEGQLLKK…VIFYLIIRRK (221 aa)) lie on the Extracellular side of the membrane. A disulfide bond links Cys151 and Cys165. A glycan (N-linked (GlcNAc...) asparagine) is linked at Asn164. Helical transmembrane passes span 245–269 (PLFY…VFYL), 277–295 (MGLS…LLLA), and 311–332 (YLMF…VLNL). At 333-469 (HHRSPHTHQM…WQFVAMVVDR (137 aa)) the chain is on the cytoplasmic side. The segment at 362 to 381 (RPKPERDQLPEPHHSFSPRS) is disordered. The segment covering 363 to 375 (PKPERDQLPEPHH) has biased composition (basic and acidic residues). Residue Tyr390 is modified to Phosphotyrosine; by Tyr-kinases. Residues 470–488 (LFLWTFIVFTSVGTLVIFL) traverse the membrane as a helical segment.

The protein belongs to the ligand-gated ion channel (TC 1.A.9) family. Acetylcholine receptor (TC 1.A.9.1) subfamily. Beta-1/CHRNB1 sub-subfamily. In terms of assembly, pentamer of two alpha chains, and one each of the beta, delta, and gamma (in immature muscle) or epsilon (in mature muscle) chains. The muscle heteropentamer composed of alpha-1, beta-1, delta, epsilon subunits interacts with the alpha-conotoxin ImII.

The protein localises to the postsynaptic cell membrane. Its subcellular location is the cell membrane. The catalysed reaction is K(+)(in) = K(+)(out). It catalyses the reaction Na(+)(in) = Na(+)(out). After binding acetylcholine, the AChR responds by an extensive change in conformation that affects all subunits and leads to opening of an ion-conducting channel across the plasma membrane. This chain is Acetylcholine receptor subunit beta (Chrnb1), found in Rattus norvegicus (Rat).